A 274-amino-acid polypeptide reads, in one-letter code: MSTEVRIKRITTRDIRARKGAEPLVVLTAYTAPIARLLDPICDILLVGDSLGMVVYGMETTLAVTLEMMINHGAAVVRSSSRACVVVDMPFGSYQESKEQAFRNCARVMAETGCAAVKLEGGRELAETIRFLTDRGIPVMAHIGLKPQAVHAAGGFRAQGRIESEAEAIRADARAITEAGAFSVVVEGTVEPVAQALSAEIAIPTIGIGASAACDGQVLVIDDLVGLFDDFTPKFVKRYADLRPIITKAAEDYAAEVKARTFPGPEHCFGVAKK.

Asp-49 and Asp-88 together coordinate Mg(2+). 3-methyl-2-oxobutanoate is bound by residues 49–50 (DS), Asp-88, and Lys-118. Mg(2+) is bound at residue Glu-120. Residue Glu-187 is the Proton acceptor of the active site.

The protein belongs to the PanB family. Homodecamer; pentamer of dimers. Mg(2+) is required as a cofactor.

It localises to the cytoplasm. The catalysed reaction is 3-methyl-2-oxobutanoate + (6R)-5,10-methylene-5,6,7,8-tetrahydrofolate + H2O = 2-dehydropantoate + (6S)-5,6,7,8-tetrahydrofolate. It participates in cofactor biosynthesis; (R)-pantothenate biosynthesis; (R)-pantoate from 3-methyl-2-oxobutanoate: step 1/2. Catalyzes the reversible reaction in which hydroxymethyl group from 5,10-methylenetetrahydrofolate is transferred onto alpha-ketoisovalerate to form ketopantoate. The protein is 3-methyl-2-oxobutanoate hydroxymethyltransferase of Paramagnetospirillum magneticum (strain ATCC 700264 / AMB-1) (Magnetospirillum magneticum).